A 327-amino-acid chain; its full sequence is Phenylalanine--tRNA ligase alpha subunit (327 aa).

Residue Glu-252 coordinates Mg(2+).

It belongs to the class-II aminoacyl-tRNA synthetase family. Phe-tRNA synthetase alpha subunit type 1 subfamily. In terms of assembly, tetramer of two alpha and two beta subunits. Mg(2+) serves as cofactor.

The protein localises to the cytoplasm. The enzyme catalyses tRNA(Phe) + L-phenylalanine + ATP = L-phenylalanyl-tRNA(Phe) + AMP + diphosphate + H(+). The polypeptide is Phenylalanine--tRNA ligase alpha subunit (Haemophilus ducreyi (strain 35000HP / ATCC 700724)).